The chain runs to 359 residues: E3 ubiquitin-protein ligase RNF146 (359 aa).

An RING-type zinc finger spans residues 36-74; the sequence is CAICLQTCVHPVSLPCKHVFCYLCVKGASWLGKRCALCR. Glycyl lysine isopeptide (Lys-Gly) (interchain with G-Cter in ubiquitin) cross-links involve residues Lys84 and Lys94. Residues 91–167 enclose the WWE domain; that stretch reads EELKAASRGN…EHGRRRKIKR (77 aa). A glycoprotein contacts are provided by Tyr107, Arg110, and Trp114. A Glycyl lysine isopeptide (Lys-Gly) (interchain with G-Cter in ubiquitin) cross-link involves residue Lys130. Tyr144, Gln153, Arg163, and Lys175 together coordinate a glycoprotein. Lys175 is covalently cross-linked (Glycyl lysine isopeptide (Lys-Gly) (interchain with G-Cter in ubiquitin)). Residues 259–359 form a disordered region; that stretch reads ERSHRGEGEE…PDGQCTVTEV (101 aa). The span at 284 to 298 shows a compositional bias: acidic residues; that stretch reads SVEETESDASSDSED. Ser290 and Ser294 each carry phosphoserine. The segment covering 306-322 has biased composition (polar residues); sequence HSLTQQRLLVPNANQTV.

As to quaternary structure, can form homooligomers. Interacts with PARsylated AXIN1, AXIN2, BLZF1, CASC3, H1-2, IPO7, LIG3, NCL, PARP1, XRCC1, XRCC5 and XRCC6. Interacts with DDB1, DHX15, IQGAP1, LRPPRC, PARP2, PRKDC, RUVBL2, TNKS1 and TNKS2. Binding often leads to interactor ubiquitination, in the presence of the appropriate E1 and E2 enzymes, and proteasomal degradation. In terms of processing, ubiquitinated; autoubiquitinated. Autoubiquitination is enhanced upon poly(ADP-ribose)-binding.

Its subcellular location is the cytoplasm. The protein localises to the cytosol. It is found in the nucleus. It carries out the reaction S-ubiquitinyl-[E2 ubiquitin-conjugating enzyme]-L-cysteine + [acceptor protein]-L-lysine = [E2 ubiquitin-conjugating enzyme]-L-cysteine + N(6)-ubiquitinyl-[acceptor protein]-L-lysine.. Its pathway is protein modification; protein ubiquitination. Its function is as follows. E3 ubiquitin-protein ligase that specifically binds poly-ADP-ribosylated (PARsylated) proteins and mediates their ubiquitination and subsequent degradation. May regulate many important biological processes, such as cell survival and DNA damage response. Acts as an activator of the Wnt signaling pathway by mediating the ubiquitination of PARsylated AXIN1 and AXIN2, 2 key components of the beta-catenin destruction complex. Acts in cooperation with tankyrase proteins (TNKS and TNKS2), which mediate PARsylation of target proteins AXIN1, AXIN2, BLZF1, CASC3, TNKS and TNKS2. Recognizes and binds tankyrase-dependent PARsylated proteins via its WWE domain and mediates their ubiquitination, leading to their degradation. Different ubiquitin linkage types have been observed: TNKS2 undergoes ubiquitination at 'Lys-48' and 'Lys-63', while AXIN1 is only ubiquitinated at 'Lys-48'. May regulate TNKS and TNKS2 subcellular location, preventing aggregation at a centrosomal location. Neuroprotective protein. Protects the brain against N-methyl-D-aspartate (NMDA) receptor-mediated glutamate excitotoxicity and ischemia, by interfering with PAR-induced cell death, called parthanatos. Prevents nuclear translocation of AIFM1 in a PAR-binding dependent manner. Does not affect PARP1 activation. Protects against cell death induced by DNA damaging agents, such as N-methyl-N-nitro-N-nitrosoguanidine (MNNG) and rescues cells from G1 arrest. Promotes cell survival after gamma-irradiation. Facilitates DNA repair. This is E3 ubiquitin-protein ligase RNF146 (RNF146) from Ailuropoda melanoleuca (Giant panda).